The sequence spans 545 residues: Chaperonin GroEL (545 aa).

ATP is bound by residues 31–34 (TLGP), 88–92 (DGTTT), Gly-415, 478–480 (NAA), and Asp-494.

It belongs to the chaperonin (HSP60) family. In terms of assembly, forms a cylinder of 14 subunits composed of two heptameric rings stacked back-to-back. Interacts with the co-chaperonin GroES.

It is found in the cytoplasm. It carries out the reaction ATP + H2O + a folded polypeptide = ADP + phosphate + an unfolded polypeptide.. In terms of biological role, together with its co-chaperonin GroES, plays an essential role in assisting protein folding. The GroEL-GroES system forms a nano-cage that allows encapsulation of the non-native substrate proteins and provides a physical environment optimized to promote and accelerate protein folding. This Streptococcus pyogenes serotype M4 (strain MGAS10750) protein is Chaperonin GroEL.